A 407-amino-acid chain; its full sequence is Indoleamine 2,3-dioxygenase 2 (407 aa).

Residue His347 participates in heme binding.

Belongs to the indoleamine 2,3-dioxygenase family. Heme serves as cofactor. In terms of tissue distribution, detected in liver, small intestine, spleen, placenta, thymus, lung, brain, kidney, and colon. Also expressed at low level in testis and thyroid. Not expressed in the majority of human tumor samples (&gt;99%).

The catalysed reaction is L-tryptophan + O2 = N-formyl-L-kynurenine. The protein operates within amino-acid degradation; L-tryptophan degradation via kynurenine pathway; L-kynurenine from L-tryptophan: step 1/2. Its activity is regulated as follows. Activity is inhibited by D-1MT (1-methyl-D-tryptophan) and MTH-trp (methylthiohydantoin-DL-tryptophan) but not L-1MT (1-methyl-L-tryptophan). In terms of biological role, catalyzes the first and rate limiting step of the catabolism of the essential amino acid tryptophan along the kynurenine pathway. Involved in immune regulation. May not play a significant role in tryptophan-related tumoral resistance. This Homo sapiens (Human) protein is Indoleamine 2,3-dioxygenase 2.